We begin with the raw amino-acid sequence, 166 residues long: Endoribonuclease YbeY (166 aa).

The Zn(2+) site is built by H132, H136, and H142.

Belongs to the endoribonuclease YbeY family. It depends on Zn(2+) as a cofactor.

Its subcellular location is the cytoplasm. In terms of biological role, single strand-specific metallo-endoribonuclease involved in late-stage 70S ribosome quality control and in maturation of the 3' terminus of the 16S rRNA. This is Endoribonuclease YbeY from Clostridium botulinum (strain ATCC 19397 / Type A).